The sequence spans 363 residues: MSKNYHIAVLPGDGIGPEVMTQALKVLDAVRNRFAMRITTSHYDVGGAAIDNHGQPLPPATVEGCEQADAVLFGSVGGPKWEHLPPDQQPERGALLPLRKHFKLFSNLRPAKLYQGLEAFCPLRADIAANGFDILCVRELTGGIYFGQPKGREGSGQYEKAFDTEVYHRFEIERIARIAFESARKRRHKVTSIDKANVLQSSILWREIVNEIATEYPDVELAHMYIDNATMQLIKDPSQFDVLLCSNLFGDILSDECAMITGSMGMLPSASLNEQGFGLYEPAGGSAPDIAGKNIANPIAQILSLALLLRYSLDADDAACAIERAINRALEEGIRTGDLARGAAAVSTDEMGDIIARYVAEGV.

78–91 (GPKWEHLPPDQQPE) is a binding site for NAD(+). Substrate contacts are provided by Arg-99, Arg-109, Arg-138, and Asp-227. Mg(2+) is bound by residues Asp-227, Asp-251, and Asp-255. 285 to 297 (GSAPDIAGKNIAN) contributes to the NAD(+) binding site.

This sequence belongs to the isocitrate and isopropylmalate dehydrogenases family. LeuB type 1 subfamily. As to quaternary structure, homodimer. Mg(2+) is required as a cofactor. Mn(2+) serves as cofactor.

Its subcellular location is the cytoplasm. The catalysed reaction is (2R,3S)-3-isopropylmalate + NAD(+) = 4-methyl-2-oxopentanoate + CO2 + NADH. The protein operates within amino-acid biosynthesis; L-leucine biosynthesis; L-leucine from 3-methyl-2-oxobutanoate: step 3/4. Requires K(+) ions for optimum activity. Catalyzes the oxidation of 3-carboxy-2-hydroxy-4-methylpentanoate (3-isopropylmalate) to 3-carboxy-4-methyl-2-oxopentanoate. The product decarboxylates to 4-methyl-2 oxopentanoate. In Escherichia coli (strain K12), this protein is 3-isopropylmalate dehydrogenase.